The sequence spans 216 residues: ATP phosphoribosyltransferase (216 aa).

The protein belongs to the ATP phosphoribosyltransferase family. Short subfamily. In terms of assembly, heteromultimer composed of HisG and HisZ subunits.

It is found in the cytoplasm. The catalysed reaction is 1-(5-phospho-beta-D-ribosyl)-ATP + diphosphate = 5-phospho-alpha-D-ribose 1-diphosphate + ATP. It functions in the pathway amino-acid biosynthesis; L-histidine biosynthesis; L-histidine from 5-phospho-alpha-D-ribose 1-diphosphate: step 1/9. In terms of biological role, catalyzes the condensation of ATP and 5-phosphoribose 1-diphosphate to form N'-(5'-phosphoribosyl)-ATP (PR-ATP). Has a crucial role in the pathway because the rate of histidine biosynthesis seems to be controlled primarily by regulation of HisG enzymatic activity. In Thiobacillus denitrificans (strain ATCC 25259 / T1), this protein is ATP phosphoribosyltransferase.